A 119-amino-acid chain; its full sequence is Holo-[acyl-carrier-protein] synthase (119 aa).

Residues Asp5 and Glu51 each contribute to the Mg(2+) site.

It belongs to the P-Pant transferase superfamily. AcpS family. Mg(2+) serves as cofactor.

The protein localises to the cytoplasm. The catalysed reaction is apo-[ACP] + CoA = holo-[ACP] + adenosine 3',5'-bisphosphate + H(+). In terms of biological role, transfers the 4'-phosphopantetheine moiety from coenzyme A to a Ser of acyl-carrier-protein. This chain is Holo-[acyl-carrier-protein] synthase, found in Helicobacter pylori (strain J99 / ATCC 700824) (Campylobacter pylori J99).